A 382-amino-acid polypeptide reads, in one-letter code: Lipid-A-disaccharide synthase (382 aa).

This sequence belongs to the LpxB family.

It carries out the reaction 2-N,3-O-bis[(3R)-3-hydroxytetradecanoyl]-alpha-D-glucosaminyl 1-phosphate + UDP-2-N,3-O-bis[(3R)-3-hydroxytetradecanoyl]-alpha-D-glucosamine = lipid A disaccharide (E. coli) + UDP + H(+). The enzyme catalyses a lipid X + a UDP-2-N,3-O-bis[(3R)-3-hydroxyacyl]-alpha-D-glucosamine = a lipid A disaccharide + UDP + H(+). It functions in the pathway glycolipid biosynthesis; lipid IV(A) biosynthesis; lipid IV(A) from (3R)-3-hydroxytetradecanoyl-[acyl-carrier-protein] and UDP-N-acetyl-alpha-D-glucosamine: step 5/6. In terms of biological role, condensation of UDP-2,3-diacylglucosamine and 2,3-diacylglucosamine-1-phosphate to form lipid A disaccharide, a precursor of lipid A, a phosphorylated glycolipid that anchors the lipopolysaccharide to the outer membrane of the cell. This Escherichia coli O45:K1 (strain S88 / ExPEC) protein is Lipid-A-disaccharide synthase.